A 1342-amino-acid polypeptide reads, in one-letter code: DNA-directed RNA polymerase subunit beta (1342 aa).

2 positions are modified to N6-acetyllysine: K1022 and K1200.

Belongs to the RNA polymerase beta chain family. The RNAP catalytic core consists of 2 alpha, 1 beta, 1 beta' and 1 omega subunit. When a sigma factor is associated with the core the holoenzyme is formed, which can initiate transcription.

It catalyses the reaction RNA(n) + a ribonucleoside 5'-triphosphate = RNA(n+1) + diphosphate. In terms of biological role, DNA-dependent RNA polymerase catalyzes the transcription of DNA into RNA using the four ribonucleoside triphosphates as substrates. The sequence is that of DNA-directed RNA polymerase subunit beta from Shigella dysenteriae serotype 1 (strain Sd197).